We begin with the raw amino-acid sequence, 657 residues long: LIM and SH3 domain protein Lasp (657 aa).

Residues 3–63 (KTCARCQKVV…EAHIPKAKAT (61 aa)) enclose the LIM zinc-binding domain. Nebulin repeat units follow at residues 64-95 (AIADTPELKRIAENTKIQSNVKYHADFEKAKG) and 96-130 (KFTQVADDPETLRIKQNTKHISNVAYHGDLEKKAA). Disordered regions lie at residues 130–151 (AMEKQRGSAEVSDSSNESEYFS), 164–223 (PTAS…PIQH), 235–257 (YQQLQQQQQQQQQQRAQQQQLHD), 294–318 (LYPTATSQQQQMPPPQSPANPQQQA), 332–415 (NSHH…SAAS), and 460–528 (KQHA…PKRI). The span at 140-150 (VSDSSNESEYF) shows a compositional bias: polar residues. Composition is skewed to low complexity over residues 172–215 (AATT…QQQT) and 236–254 (QQLQQQQQQQQQQRAQQQQ). Positions 332–341 (NSHHPSGNSV) are enriched in polar residues. A compositionally biased stretch (low complexity) spans 342 to 357 (DQYDQPQQQQHQPQQQ). A compositionally biased stretch (polar residues) spans 358 to 370 (STNPTLVAAQQQQ). Over residues 371–403 (SHHSLLNNNASNGGISHSHHSNINNNGHGSQNQ) the composition is skewed to low complexity. Residues 460 to 475 (KQHASNGHMPNQQQQH) are compositionally biased toward polar residues. Residues Ser-505 and Ser-530 each carry the phosphoserine modification. Residues 548–592 (EQAHQQQKHQQYYQQVQMMQQQEHPPQQQQMRQQPSYSSLQEKQS) form a disordered region. Low complexity predominate over residues 549-586 (QAHQQQKHQQYYQQVQMMQQQEHPPQQQQMRQQPSYSS). Residues 596-657 (TAMRVYRAIY…PANYVEQAVI (62 aa)) enclose the SH3 domain.

Interacts with osk.

The sequence is that of LIM and SH3 domain protein Lasp from Drosophila melanogaster (Fruit fly).